The chain runs to 139 residues: Large-conductance mechanosensitive channel (139 aa).

A run of 2 helical transmembrane segments spans residues 16–36 and 79–99; these read VIDL…VKSL and GAFV…FLLV.

The protein belongs to the MscL family. Homopentamer.

Its subcellular location is the cell inner membrane. Its function is as follows. Channel that opens in response to stretch forces in the membrane lipid bilayer. May participate in the regulation of osmotic pressure changes within the cell. The protein is Large-conductance mechanosensitive channel of Caulobacter vibrioides (strain ATCC 19089 / CIP 103742 / CB 15) (Caulobacter crescentus).